Here is a 333-residue protein sequence, read N- to C-terminus: Electron transfer flavoprotein subunit alpha, mitochondrial (333 aa).

Residues 1–19 constitute a mitochondrion transit peptide; sequence MFRAAAPGQLRRAASSLRF. Residues 20-204 form a domain I region; that stretch reads QSTLVIAEHA…EISEWLDQKL (185 aa). N6-acetyllysine; alternate is present on K59. An N6-succinyllysine; alternate modification is found at K59. N6-acetyllysine is present on K62. N6-acetyllysine; alternate is present on K69. K69 is modified (N6-succinyllysine; alternate). N6-acetyllysine is present on K75. The residue at position 93 (T93) is a Phosphothreonine. Residues K101 and K139 each carry the N6-acetyllysine modification. S140 carries the phosphoserine modification. An N6-acetyllysine; alternate modification is found at K158. K158 carries the post-translational modification N6-succinyllysine; alternate. K164 is subject to N6-acetyllysine. N6-succinyllysine is present on K187. Residue K203 is modified to N6-acetyllysine; alternate. Position 203 is an N6-succinyllysine; alternate (K203). The domain II stretch occupies residues 205 to 333; that stretch reads TKSDRPELTG…PEMTEILKKK (129 aa). Position 216 is an N6-succinyllysine (K216). An FAD-binding site is contributed by R223. Residues K226 and K232 each carry the N6-acetyllysine; alternate modification. Residues K226 and K232 each carry the N6-succinyllysine; alternate modification. FAD-binding positions include S248, 263–266, 281–286, and N300; these read VGQT and SGAIQH. Position 301 is an N6-succinyllysine (K301). 318 to 319 is a binding site for FAD; the sequence is DL.

Belongs to the ETF alpha-subunit/FixB family. As to quaternary structure, heterodimer composed of ETFA and ETFB. Identified in a complex that contains ETFA, ETFB and ETFRF1. Interaction with ETFRF1 promotes dissociation of the bound FAD and loss of electron transfer activity. Interacts with TASOR. FAD serves as cofactor.

Its subcellular location is the mitochondrion matrix. In terms of biological role, heterodimeric electron transfer flavoprotein that accepts electrons from several mitochondrial dehydrogenases, including acyl-CoA dehydrogenases, glutaryl-CoA and sarcosine dehydrogenase. It transfers the electrons to the main mitochondrial respiratory chain via ETF-ubiquinone oxidoreductase (ETF dehydrogenase). Required for normal mitochondrial fatty acid oxidation and normal amino acid metabolism. The protein is Electron transfer flavoprotein subunit alpha, mitochondrial (ETFA) of Macaca fascicularis (Crab-eating macaque).